Consider the following 155-residue polypeptide: MGVQKSEVETTSSVSAEKLFKGLCLDIDTLLPQVLPGAIKSSETLEGDGGVGTVKLVHLGDASPFKTMKQKVDAIDKATFTYSYSIIDGDILLGFIESINNHFTAVPNADGGCTVKSTIIFNTKGDAVVPEENIKFANDQNLTIFKAVEAYLIAN.

It belongs to the BetVI family.

This is Pathogenesis-related protein A (PCPR1-1) from Petroselinum crispum (Parsley).